A 156-amino-acid chain; its full sequence is Arginine repressor (156 aa).

It belongs to the ArgR family.

The protein resides in the cytoplasm. It participates in amino-acid biosynthesis; L-arginine biosynthesis [regulation]. Its function is as follows. Regulates arginine biosynthesis genes. This chain is Arginine repressor, found in Salmonella agona (strain SL483).